The sequence spans 667 residues: Tail spike protein (667 aa).

Residues Glu-360, Asp-393, and Asp-396 contribute to the active site.

It belongs to the P22likevirus tail fiber protein family. Homotrimer. Interacts with the host O-antigen lipopolysaccharides; this interaction induces cleavage of host O-antigen. Interacts with tail hub protein gp10; this interaction anchors 6 fibers onto the tail hub hexamer.

It is found in the virion. Structural component of the short non-contractile tail. The tail comprises six spikes that mediate primary attachment to the host cell lipopolysaccharides (LPS) and display endorhamnosidase enzymatic activity, hydrolyzing the alpha-1,3-O-glycosidic linkage between rhamnose and galactose of the O-antigen polysaccharide. Digestion of the LPS brings the capsid near the cell outer membrane. This Salmonella phage P22 (Bacteriophage P22) protein is Tail spike protein (9).